Here is a 232-residue protein sequence, read N- to C-terminus: 2,3-bisphosphoglycerate-dependent phosphoglycerate mutase (232 aa).

Substrate-binding positions include 10 to 17 (RHGESQWN), 23 to 24 (TG), Arg62, 89 to 92 (ERHY), Lys100, 116 to 117 (RR), and 186 to 187 (GN). Catalysis depends on His11, which acts as the Tele-phosphohistidine intermediate. Glu89 acts as the Proton donor/acceptor in catalysis.

It belongs to the phosphoglycerate mutase family. BPG-dependent PGAM subfamily. Homodimer.

The enzyme catalyses (2R)-2-phosphoglycerate = (2R)-3-phosphoglycerate. It participates in carbohydrate degradation; glycolysis; pyruvate from D-glyceraldehyde 3-phosphate: step 3/5. Catalyzes the interconversion of 2-phosphoglycerate and 3-phosphoglycerate. The chain is 2,3-bisphosphoglycerate-dependent phosphoglycerate mutase from Blochmanniella pennsylvanica (strain BPEN).